Consider the following 489-residue polypeptide: Blue-light-activated histidine kinase (489 aa).

One can recognise a PAS domain in the interval 19–93 (ATDPFRAAVE…AIKSAIAAEK (75 aa)). The residue at position 69 (Cys-69) is an S-4a-FMN cysteine. PAC domains are found at residues 93–147 (KPID…ELEK) and 232–281 (YSIE…NKAL). Positions 259–341 (NPLVLGIVQD…LLKENWAGAT (83 aa)) are HWE histidine kinase domain. Residue His-288 is modified to Phosphohistidine; by autocatalysis.

Post-translationally, FMN binds covalently to cysteine after exposure to blue light and this bond is spontaneously broken in the dark.

The catalysed reaction is ATP + protein L-histidine = ADP + protein N-phospho-L-histidine.. Its function is as follows. Photosensitive kinase that is involved in increased bacterial virulence upon exposure to light. Once ejected from an infected animal host, sunlight acts as an environmental signal that increases the virulence of the bacterium, preparing it for infection of the next host. This photoreceptor protein is directly related to the bacterium's survival and replication within host macrophages, as it is required for optimal replication of bacteria inside macrophages. This chain is Blue-light-activated histidine kinase, found in Brucella abortus (strain 2308).